Consider the following 569-residue polypeptide: Urease subunit alpha (569 aa).

Residues Gly131–Leu569 enclose the Urease domain. Ni(2+) is bound by residues His136, His138, and Lys219. Lys219 is subject to N6-carboxylysine. A substrate-binding site is contributed by His221. Ni(2+) is bound by residues His248 and His274. His322 acts as the Proton donor in catalysis. Residue Asp362 participates in Ni(2+) binding.

It belongs to the metallo-dependent hydrolases superfamily. Urease alpha subunit family. In terms of assembly, heterotrimer of UreA (gamma), UreB (beta) and UreC (alpha) subunits. Three heterotrimers associate to form the active enzyme. Ni cation serves as cofactor. Carboxylation allows a single lysine to coordinate two nickel ions.

Its subcellular location is the cytoplasm. It catalyses the reaction urea + 2 H2O + H(+) = hydrogencarbonate + 2 NH4(+). It functions in the pathway nitrogen metabolism; urea degradation; CO(2) and NH(3) from urea (urease route): step 1/1. In Prochlorococcus marinus (strain MIT 9301), this protein is Urease subunit alpha.